The sequence spans 98 residues: DNA-binding protein Fis (98 aa).

Residues 74 to 93 constitute a DNA-binding region (H-T-H motif); the sequence is QTRAATMLGINRGTLRKKLK.

It belongs to the transcriptional regulatory Fis family. As to quaternary structure, homodimer.

Functionally, activates ribosomal RNA transcription. Plays a direct role in upstream activation of rRNA promoters. This is DNA-binding protein Fis from Mannheimia haemolytica (Pasteurella haemolytica).